The following is a 166-amino-acid chain: Phosphopantetheine adenylyltransferase (166 aa).

Ser11 provides a ligand contact to substrate. ATP contacts are provided by residues 11–12 (SF) and His19. Residues Lys43, Ala76, and Arg90 each contribute to the substrate site. Residues 91–93 (GLR), Glu101, and 126–132 (YRYFSSS) contribute to the ATP site.

Belongs to the bacterial CoaD family. As to quaternary structure, homohexamer. Mg(2+) is required as a cofactor.

It is found in the cytoplasm. The enzyme catalyses (R)-4'-phosphopantetheine + ATP + H(+) = 3'-dephospho-CoA + diphosphate. The protein operates within cofactor biosynthesis; coenzyme A biosynthesis; CoA from (R)-pantothenate: step 4/5. Reversibly transfers an adenylyl group from ATP to 4'-phosphopantetheine, yielding dephospho-CoA (dPCoA) and pyrophosphate. This Streptococcus mutans serotype c (strain ATCC 700610 / UA159) protein is Phosphopantetheine adenylyltransferase.